Here is a 143-residue protein sequence, read N- to C-terminus: Ribonuclease HI (143 aa).

The 136-residue stretch at 1–136 (MQEIEIFCDG…CNSLAKLEAQ (136 aa)) folds into the RNase H type-1 domain. D9, E47, D69, and N128 together coordinate Mg(2+).

It belongs to the RNase H family. As to quaternary structure, monomer. Mg(2+) is required as a cofactor.

It localises to the cytoplasm. The catalysed reaction is Endonucleolytic cleavage to 5'-phosphomonoester.. Endonuclease that specifically degrades the RNA of RNA-DNA hybrids. This Helicobacter pylori (strain J99 / ATCC 700824) (Campylobacter pylori J99) protein is Ribonuclease HI (rnhA).